Consider the following 85-residue polypeptide: Photosystem I reaction center subunit PsaK (85 aa).

The next 2 helical transmembrane spans lie at 13-33 (VSWT…AIAI) and 59-79 (GAML…ILGL).

Belongs to the PsaG/PsaK family.

The protein resides in the cellular thylakoid membrane. This chain is Photosystem I reaction center subunit PsaK, found in Synechococcus sp. (strain WH7803).